Reading from the N-terminus, the 902-residue chain is Magnesium-transporting ATPase, P-type 1 (902 aa).

The Cytoplasmic segment spans residues M1–W98. Residues V99 to T119 traverse the membrane as a helical segment. A topological domain (extracellular) is located at residue E120. A helical membrane pass occupies residues D121–V141. At Q142–R291 the chain is on the cytoplasmic side. A helical membrane pass occupies residues V292–G312. Residues Y313–A321 are Extracellular-facing. Residues A322–M339 form a helical membrane-spanning segment. E335 is a Mg(2+) binding site. The Cytoplasmic segment spans residues I340–M699. D377 serves as the catalytic 4-aspartylphosphate intermediate. Mg(2+) is bound by residues D645, D649, and N713. The helical transmembrane segment at L700–V719 threads the bilayer. The Extracellular segment spans residues A720–P728. The helical transmembrane segment at M729–I748 threads the bilayer. Mg(2+) contacts are provided by N738 and D742. The Cytoplasmic segment spans residues P749 to G770. The helical transmembrane segment at R771 to V794 threads the bilayer. The Extracellular segment spans residues F795–Q803. A helical membrane pass occupies residues T804–V822. The Cytoplasmic segment spans residues H823–S835. The chain crosses the membrane as a helical span at residues R836–L855. At P856 to P870 the chain is on the extracellular side. Residues L871–L890 form a helical membrane-spanning segment. At V891 to Q902 the chain is on the cytoplasmic side.

Belongs to the cation transport ATPase (P-type) (TC 3.A.3) family. Type IIIB subfamily.

The protein localises to the cell inner membrane. It carries out the reaction Mg(2+)(out) + ATP + H2O = Mg(2+)(in) + ADP + phosphate + H(+). Functionally, mediates magnesium influx to the cytosol. This Salmonella typhimurium (strain 14028s / SGSC 2262) protein is Magnesium-transporting ATPase, P-type 1 (mgtA).